Consider the following 460-residue polypeptide: Adenosylhomocysteinase (460 aa).

Substrate is bound by residues T83, D158, and E184. Residue 185–187 (TTT) participates in NAD(+) binding. Residues K214 and D218 each contribute to the substrate site. NAD(+) contacts are provided by residues N219, 248 to 253 (GYGDVG), E271, 327 to 329 (IGH), and N373.

This sequence belongs to the adenosylhomocysteinase family. It depends on NAD(+) as a cofactor.

The protein localises to the cytoplasm. It carries out the reaction S-adenosyl-L-homocysteine + H2O = L-homocysteine + adenosine. Its pathway is amino-acid biosynthesis; L-homocysteine biosynthesis; L-homocysteine from S-adenosyl-L-homocysteine: step 1/1. In terms of biological role, may play a key role in the regulation of the intracellular concentration of adenosylhomocysteine. The chain is Adenosylhomocysteinase from Bdellovibrio bacteriovorus (strain ATCC 15356 / DSM 50701 / NCIMB 9529 / HD100).